The chain runs to 635 residues: Threonine--tRNA ligase (635 aa).

The region spanning 1 to 61 (MITVRLPDGS…EKDSDLAIIT (61 aa)) is the TGS domain. The catalytic stretch occupies residues 242-533 (DHRKLGKQLD…LIEHYAGALP (292 aa)). The Zn(2+) site is built by Cys-333, His-384, and His-510.

It belongs to the class-II aminoacyl-tRNA synthetase family. In terms of assembly, homodimer. It depends on Zn(2+) as a cofactor.

It localises to the cytoplasm. The catalysed reaction is tRNA(Thr) + L-threonine + ATP = L-threonyl-tRNA(Thr) + AMP + diphosphate + H(+). In terms of biological role, catalyzes the attachment of threonine to tRNA(Thr) in a two-step reaction: L-threonine is first activated by ATP to form Thr-AMP and then transferred to the acceptor end of tRNA(Thr). Also edits incorrectly charged L-seryl-tRNA(Thr). The chain is Threonine--tRNA ligase from Janthinobacterium sp. (strain Marseille) (Minibacterium massiliensis).